Reading from the N-terminus, the 1002-residue chain is Leucine-rich repeat receptor-like serine/threonine-protein kinase BAM2 (1002 aa).

The N-terminal stretch at 1–22 (MKLLLLLLLLLLLHISHSFTVA) is a signal peptide. Residues 23 to 636 (KPITELHALL…SHVKPLSATT (614 aa)) lie on the Extracellular side of the membrane. 7 N-linked (GlcNAc...) asparagine glycosylation sites follow: Asn51, Asn80, Asn97, Asn123, Asn130, Asn153, and Asn164. 22 LRR repeats span residues 68–92 (LRHVTSLDLSGLNLSGTLSSDVAHL), 93–116 (PLLQNLSLAANQISGPIPPQISNL), 118–140 (ELRHLNLSNNVFNGSFPDELSSG), 141–165 (LVNLRVLDLYNNNLTGDLPVSLTNL), 167–188 (QLRHLHLGGNYFSGKIPATYGT), 189–213 (WPVLEYLAVSGNELTGKIPPEIGNL), 215–238 (TLRELYIGYYNAFENGLPPEIGNL), 239–262 (SELVRFDAANCGLTGEIPPEIGKL), 263–285 (QKLDTLFLQVNAFTGTITQELGL), 286–309 (ISSLKSMDLSNNMFTGEIPTSFSQ), 311–334 (KNLTLLNLFRNKLYGAIPEFIGEM), 335–358 (PELEVLQLWENNFTGSIPQKLGEN), 359–382 (GRLVILDLSSNKLTGTLPPNMCSG), 384–406 (RLMTLITLGNFLFGSIPDSLGKC), 407–430 (ESLTRIRMGENFLNGSIPKELFGL), 431–456 (PKLSQVELQDNYLTGELPISGGGVSG), 458–479 (LGQISLSNNQLSGSLPAAIGNL), 480–503 (SGVQKLLLDGNKFSGSIPPEIGRL), 505–527 (QLSKLDFSHNLFSGRIAPEISRC), 528–551 (KLLTFVDLSRNELSGDIPNELTGM), 552–575 (KILNYLNLSRNHLVGSIPVTIASM), and 577–600 (SLTSVDFSYNNLSGLVPSTGQFSY). N-linked (GlcNAc...) asparagine glycosylation is found at Asn212 and Asn237. N-linked (GlcNAc...) asparagine glycans are attached at residues Asn312 and Asn346. A glycan (N-linked (GlcNAc...) asparagine) is linked at Asn420. Residue Asn478 is glycosylated (N-linked (GlcNAc...) asparagine). Asn558, Asn587, and Asn602 each carry an N-linked (GlcNAc...) asparagine glycan. A helical transmembrane segment spans residues 637-657 (KLLLVLGLLFCSMVFAIVAII). The Cytoplasmic portion of the chain corresponds to 658–1002 (KARSLRNASE…SGSPPDLLSN (345 aa)). Thr682 is subject to Phosphothreonine. The Protein kinase domain maps to 690 to 967 (LKEDNIIGKG…VQILTEIPKI (278 aa)). ATP contacts are provided by residues 696-704 (IGKGGAGIV) and Lys718. Phosphotyrosine is present on residues Tyr765 and Tyr803. The active-site Proton acceptor is the Asp816. Position 851 is a phosphoserine (Ser851). Phosphotyrosine occurs at positions 859 and 866. Position 867 is a phosphothreonine (Thr867). The tract at residues 969-1002 (LSKQQAAESDVTEKAPAINESSPDSGSPPDLLSN) is disordered. Low complexity predominate over residues 989 to 1002 (SSPDSGSPPDLLSN).

The protein belongs to the protein kinase superfamily. Ser/Thr protein kinase family. In terms of assembly, interacts with BAM1 and CLV1. Binds to the CLV3, CLE11, CLE18, CLE19, CLE22, CLE25, CLE26, CLE40, CLE41 and CLE42 mature peptides, probably via its extracellular leucine-rich repeat region. As to expression, expressed in seedlings, roots, rosette leaves, stems, inflorescences, flowers and siliques.

It is found in the cell membrane. It catalyses the reaction L-seryl-[protein] + ATP = O-phospho-L-seryl-[protein] + ADP + H(+). The enzyme catalyses L-threonyl-[protein] + ATP = O-phospho-L-threonyl-[protein] + ADP + H(+). In terms of biological role, necessary for male gametophyte development, as well as ovule specification and function. Involved in cell-cell communication process required during early anther development, and regulating cell division and differentiation to organize cell layers. Required for the development of high-ordered vascular strands within the leaf and a correlated control of leaf shape, size and symmetry. May regulate the CLV1-dependent CLV3-mediated signaling in meristems maintenance. In Arabidopsis thaliana (Mouse-ear cress), this protein is Leucine-rich repeat receptor-like serine/threonine-protein kinase BAM2 (BAM2).